The chain runs to 459 residues: Bifunctional protein GlmU (459 aa).

Residues 1 to 230 (MVKRYAVILA…FEETIGVNDR (230 aa)) are pyrophosphorylase. Residues 9–12 (LAAG), Lys-23, Gln-73, and 78–79 (GT) contribute to the UDP-N-acetyl-alpha-D-glucosamine site. Asp-103 serves as a coordination point for Mg(2+). UDP-N-acetyl-alpha-D-glucosamine-binding residues include Gly-140, Glu-155, Asn-170, and Asn-228. Mg(2+) is bound at residue Asn-228. Residues 231–251 (VALAEAEKIMRERICRKHMMN) are linker. The N-acetyltransferase stretch occupies residues 252 to 459 (GVTIIDPAHT…VDRLSIKKNS (208 aa)). The UDP-N-acetyl-alpha-D-glucosamine site is built by Arg-333 and Lys-351. Catalysis depends on His-363, which acts as the Proton acceptor. UDP-N-acetyl-alpha-D-glucosamine-binding residues include Tyr-366 and Asn-377. Residues 386–387 (NY), Ala-423, and Arg-440 each bind acetyl-CoA.

The protein in the N-terminal section; belongs to the N-acetylglucosamine-1-phosphate uridyltransferase family. This sequence in the C-terminal section; belongs to the transferase hexapeptide repeat family. As to quaternary structure, homotrimer. Requires Mg(2+) as cofactor.

It localises to the cytoplasm. The enzyme catalyses alpha-D-glucosamine 1-phosphate + acetyl-CoA = N-acetyl-alpha-D-glucosamine 1-phosphate + CoA + H(+). It carries out the reaction N-acetyl-alpha-D-glucosamine 1-phosphate + UTP + H(+) = UDP-N-acetyl-alpha-D-glucosamine + diphosphate. The protein operates within nucleotide-sugar biosynthesis; UDP-N-acetyl-alpha-D-glucosamine biosynthesis; N-acetyl-alpha-D-glucosamine 1-phosphate from alpha-D-glucosamine 6-phosphate (route II): step 2/2. It participates in nucleotide-sugar biosynthesis; UDP-N-acetyl-alpha-D-glucosamine biosynthesis; UDP-N-acetyl-alpha-D-glucosamine from N-acetyl-alpha-D-glucosamine 1-phosphate: step 1/1. Its pathway is bacterial outer membrane biogenesis; LPS lipid A biosynthesis. Catalyzes the last two sequential reactions in the de novo biosynthetic pathway for UDP-N-acetylglucosamine (UDP-GlcNAc). The C-terminal domain catalyzes the transfer of acetyl group from acetyl coenzyme A to glucosamine-1-phosphate (GlcN-1-P) to produce N-acetylglucosamine-1-phosphate (GlcNAc-1-P), which is converted into UDP-GlcNAc by the transfer of uridine 5-monophosphate (from uridine 5-triphosphate), a reaction catalyzed by the N-terminal domain. This Geobacillus sp. (strain WCH70) protein is Bifunctional protein GlmU.